The primary structure comprises 234 residues: Exotoxin type G (234 aa).

A signal peptide spans 1-24 (MKTNILTIIILSCVFSYGSQLAYA).

It belongs to the staphylococcal/streptococcal toxin family.

Functionally, mitogenic for human peripheral blood lymphocytes. The polypeptide is Exotoxin type G (speG) (Streptococcus pyogenes serotype M3 (strain ATCC BAA-595 / MGAS315)).